Here is a 368-residue protein sequence, read N- to C-terminus: tRNA(Met) cytidine acetate ligase (368 aa).

ATP-binding positions include 7-20, glycine 96, asparagine 152, and arginine 175; that span reads IAEF…HKYL.

Belongs to the TmcAL family.

Its subcellular location is the cytoplasm. The catalysed reaction is cytidine(34) in elongator tRNA(Met) + acetate + ATP = N(4)-acetylcytidine(34) in elongator tRNA(Met) + AMP + diphosphate. Functionally, catalyzes the formation of N(4)-acetylcytidine (ac(4)C) at the wobble position of elongator tRNA(Met), using acetate and ATP as substrates. First activates an acetate ion to form acetyladenylate (Ac-AMP) and then transfers the acetyl group to tRNA to form ac(4)C34. This is tRNA(Met) cytidine acetate ligase from Streptococcus pyogenes serotype M5 (strain Manfredo).